The sequence spans 325 residues: 2-oxoglutarate-dependent dioxygenase tropC (325 aa).

A Fe2OG dioxygenase domain is found at 185–287; sequence PSIPMRLLHY…RYSVAFFLNG (103 aa). Fe cation-binding residues include His210, Asp212, and His269. A 2-oxoglutarate-binding site is contributed by Arg278.

This sequence belongs to the iron/ascorbate-dependent oxidoreductase family. Fe(2+) serves as cofactor.

Its pathway is secondary metabolite biosynthesis. In terms of biological role, 2-oxoglutarate-dependent dioxygenase; part of the gene cluster that mediates the biosynthesis of the tropolone class of fungal maleic anhydrides. The pathway begins with the synthesis of 3-methylorcinaldehyde by the non-reducing polyketide synthase (PKS) tropA. 3-methylorcinaldehyde is the substrate for the FAD-dependent monooxygenase tropB to yield a dearomatized hydroxycyclohexadione. The 2-oxoglutarate-dependent dioxygenase tropC then performs the oxidative ring expansion to provide the first tropolone metabolite stipitaldehyde. Trop D converts stipitaldehyde into stipitacetal which is in turn converted to stipitalide by the short-chain dehydrogenase/reductase tropE. The next steps involve tropF, tropG, tropH, tropI and tropJ to form successive tropolone maleic anhydrides including stipitaldehydic, stipitatonic and stipitatic acids. The chain is 2-oxoglutarate-dependent dioxygenase tropC from Talaromyces stipitatus (strain ATCC 10500 / CBS 375.48 / QM 6759 / NRRL 1006) (Penicillium stipitatum).